Reading from the N-terminus, the 604-residue chain is Pescadillo homolog (604 aa).

The BRCT domain maps to 349–448; that stretch reads PTSTLFSKFI…ELLPVNKYAP (100 aa). Disordered regions lie at residues 452 to 562 and 579 to 604; these read LPPH…MTNK and TRTQ…LSKK. Coiled-coil stretches lie at residues 468-522 and 573-604; these read EAEK…LEAA and GIDK…LSKK. Residues 476–510 are compositionally biased toward acidic residues; that stretch reads ENAEEEEEDEVDEDDEDADEDEEDEEEEDEEEDED. The segment covering 593 to 604 has biased composition (basic and acidic residues); that stretch reads KTKAQLDKLSKK.

The protein belongs to the pescadillo family. As to quaternary structure, component of the NOP7 complex, composed of ERB1, NOP7 and YTM1. The complex is held together by ERB1, which interacts with NOP7 via its N-terminal domain and with YTM1 via a high-affinity interaction between the seven-bladed beta-propeller domains of the 2 proteins. The NOP7 complex associates with the 66S pre-ribosome.

The protein localises to the nucleus. It localises to the nucleolus. Its subcellular location is the nucleoplasm. Its function is as follows. Component of the NOP7 complex, which is required for maturation of the 25S and 5.8S ribosomal RNAs and formation of the 60S ribosome. This chain is Pescadillo homolog, found in Scheffersomyces stipitis (strain ATCC 58785 / CBS 6054 / NBRC 10063 / NRRL Y-11545) (Yeast).